Consider the following 106-residue polypeptide: Halilectin 3, beta chain (106 aa).

Asn65 carries an N-linked (GlcNAc...) asparagine glycan.

Probable heterotrimer consisting of an alpha chain and two beta chains. The alpha chain can probably have different glycosylation states. In terms of processing, glycosylated.

Its function is as follows. Lectin with affinity for N-acetyl-galactosamine, carragenan and glycoprotein porcine stomach mucin (PSM). Has metal-independent hemagglutinating activity towards erythrocytes from rabbit and human. Hemagglutinating activity is not inhibited by D-galactose, D-glucose, D-mannose, D-fucose, methyl-alpha-D-galactopyranoside, methyl-alpha-D-glucopyranoside, N-acetyl-glucosamine, N-acetyl-mannosamine, D-fructose, alpha-D-lactose, beta-D-lactose, D-lactulose, D-sucrose, fucoidan or glycoproteins thyroglobulin and ovalmucoid. This is Halilectin 3, beta chain from Haliclona caerulea (Blue Caribbean sponge).